The sequence spans 201 residues: Large ribosomal subunit protein uL4 (201 aa).

The disordered stretch occupies residues 46 to 71 (QKTRAEITGSGKKPWRQKGTGRARSG).

This sequence belongs to the universal ribosomal protein uL4 family. As to quaternary structure, part of the 50S ribosomal subunit.

In terms of biological role, one of the primary rRNA binding proteins, this protein initially binds near the 5'-end of the 23S rRNA. It is important during the early stages of 50S assembly. It makes multiple contacts with different domains of the 23S rRNA in the assembled 50S subunit and ribosome. Forms part of the polypeptide exit tunnel. The protein is Large ribosomal subunit protein uL4 of Klebsiella pneumoniae (strain 342).